The primary structure comprises 967 residues: MAVALDSQIDAPLEVEGCLIMKVEKDPEWASEPILEGSDSSETFRKCFRQFCYEDVTGPHEAFSKLWELCCRWLKPEMRSKEQILELLVIEQFLTILPEKIQAWAQKQCPQSGEEAVALVVHLEKETGRLRQQVSSPVHREKHSPLGAAWEVADFQPEQVETQPRAVSREEPGSLHSGHQEQLNRKRERRPLPKNARPSPWVPALADEWNTLDQEVTTTRLPAGSQEPVKDVHVARGFSYRKSVHQIPAQRDLYRDFRKENVGNVVSLGSAVSTSNKITRLEQRKEPWTLGLHSSNKRSILRSNYVKEKSVHAIQVPARSAGKTWREQQQWGLEDEKIAGVHWSYEETKTFLAILKESRFYETLQACPRNSQVYGAVAEWLRECGFLRTPEQCRTKFKSLQKSYRKVRNGHMLEPCAFFEDMDALLNPAARAPSTDKPKEMIPVPRLKRIAISAKEHISLVEEEEAAEDSDDDEIGIEFIRKSEIHGAPVLFQNLSGVHWGYEETKTFLDILRETRFYEALQACHRKSKLYGAVAEQLRECGFLRTPEQCRTKFKSLQKSYRKVKNGHVLESCAFYKEMDALINSRASAPSPSTPEEVPSPSRQERGGIEVEPQEPTGWEPEETSQEAVIEDSCSERMSEEEIVQEPEFQGPPGLLQSPNDFEIGSSIKEDPTQIVYKDMEQHRALIEKSKRVVSQSTDPSKYRKRECISGRQWENLQGIRQGKPMSQPRDLGKAVVHQRPFVGKRPYRLLKYGESFGRSTRLMCRMTHHKENPYKCGVCGKCFGRSRSLIRHQRIHTGEKPFKCLDCGKSFNDSSNFGAHQRIHTGEKPYRCGECGKCFSQSSSLIIHQRTHTGEKPYQCGECGKSFTNSSHFSAHRRVHTGENPYKCVDCEKSFNNCTRFREHRRIHTGEKPYGCAQCGKRFSKSSVLTKHREVHVREKPLPHPPSLYCPENPHKGKTDEFRKTF.

Residue lysine 22 forms a Glycyl lysine isopeptide (Lys-Gly) (interchain with G-Cter in SUMO2) linkage. The 83-residue stretch at 45-127 (RKCFRQFCYE…ALVVHLEKET (83 aa)) folds into the SCAN box domain. The tract at residues 150–205 (WEVADFQPEQVETQPRAVSREEPGSLHSGHQEQLNRKRERRPLPKNARPSPWVPAL) is disordered. A compositionally biased stretch (basic and acidic residues) spans 167–185 (VSREEPGSLHSGHQEQLNR). The KRAB domain maps to 229 to 300 (VKDVHVARGF…GLHSSNKRSI (72 aa)). Residues lysine 242, lysine 259, lysine 277, lysine 337, lysine 482, and lysine 529 each participate in a glycyl lysine isopeptide (Lys-Gly) (interchain with G-Cter in SUMO2) cross-link. Residues 586–602 (RASAPSPSTPEEVPSPS) are compositionally biased toward low complexity. A disordered region spans residues 586-626 (RASAPSPSTPEEVPSPSRQERGGIEVEPQEPTGWEPEETSQ). Phosphoserine occurs at positions 591 and 600. Residues lysine 734, lysine 745, and lysine 752 each participate in a glycyl lysine isopeptide (Lys-Gly) (interchain with G-Cter in SUMO2) cross-link. 6 consecutive C2H2-type zinc fingers follow at residues 775–797 (YKCGVCGKCFGRSRSLIRHQRIH), 803–825 (FKCLDCGKSFNDSSNFGAHQRIH), 831–853 (YRCGECGKCFSQSSSLIIHQRTH), 859–881 (YQCGECGKSFTNSSHFSAHRRVH), 887–909 (YKCVDCEKSFNNCTRFREHRRIH), and 915–937 (YGCAQCGKRFSKSSVLTKHREVH). Positions 941-967 (KPLPHPPSLYCPENPHKGKTDEFRKTF) are disordered. The segment covering 954–967 (NPHKGKTDEFRKTF) has biased composition (basic and acidic residues).

The protein belongs to the krueppel C2H2-type zinc-finger protein family.

Its subcellular location is the nucleus. Its function is as follows. May be involved in transcriptional regulation. This is Zinc finger protein with KRAB and SCAN domains 2 (ZKSCAN2) from Homo sapiens (Human).